A 120-amino-acid chain; its full sequence is Large ribosomal subunit protein uL18 (120 aa).

The tract at residues 1–29 (MITKPNKNAGRKKRHAHVRRTLSGTPQRP) is disordered. Positions 9–20 (AGRKKRHAHVRR) are enriched in basic residues.

Belongs to the universal ribosomal protein uL18 family. As to quaternary structure, part of the 50S ribosomal subunit; part of the 5S rRNA/L5/L18/L25 subcomplex. Contacts the 5S and 23S rRNAs.

This is one of the proteins that bind and probably mediate the attachment of the 5S RNA into the large ribosomal subunit, where it forms part of the central protuberance. This is Large ribosomal subunit protein uL18 from Shouchella clausii (strain KSM-K16) (Alkalihalobacillus clausii).